A 234-amino-acid polypeptide reads, in one-letter code: Enolase-phosphatase E1 (234 aa).

The interval arginine 212 to proline 234 is disordered.

The protein belongs to the HAD-like hydrolase superfamily. MasA/MtnC family. Monomer. Mg(2+) is required as a cofactor.

It carries out the reaction 5-methylsulfanyl-2,3-dioxopentyl phosphate + H2O = 1,2-dihydroxy-5-(methylsulfanyl)pent-1-en-3-one + phosphate. It participates in amino-acid biosynthesis; L-methionine biosynthesis via salvage pathway; L-methionine from S-methyl-5-thio-alpha-D-ribose 1-phosphate: step 3/6. Its pathway is amino-acid biosynthesis; L-methionine biosynthesis via salvage pathway; L-methionine from S-methyl-5-thio-alpha-D-ribose 1-phosphate: step 4/6. Its function is as follows. Bifunctional enzyme that catalyzes the enolization of 2,3-diketo-5-methylthiopentyl-1-phosphate (DK-MTP-1-P) into the intermediate 2-hydroxy-3-keto-5-methylthiopentenyl-1-phosphate (HK-MTPenyl-1-P), which is then dephosphorylated to form the acireductone 1,2-dihydroxy-3-keto-5-methylthiopentene (DHK-MTPene). The chain is Enolase-phosphatase E1 from Leptospira interrogans serogroup Icterohaemorrhagiae serovar copenhageni (strain Fiocruz L1-130).